Reading from the N-terminus, the 97-residue chain is Acylphosphatase (97 aa).

The Acylphosphatase-like domain occupies 11-97 (TYYVRVRGTV…EKRYERFEQH (87 aa)). Catalysis depends on residues Arg26 and Asn44. The disordered stretch occupies residues 76-97 (RVTEVSGEERSTEKRYERFEQH). A compositionally biased stretch (basic and acidic residues) spans 82-97 (GEERSTEKRYERFEQH).

This sequence belongs to the acylphosphatase family.

It carries out the reaction an acyl phosphate + H2O = a carboxylate + phosphate + H(+). This Paraburkholderia xenovorans (strain LB400) protein is Acylphosphatase (acyP).